The chain runs to 622 residues: Pyranose 2-oxidase (622 aa).

The signal sequence occupies residues 1-28 (MSTSSSDPFYNFAKTSFKSAAAQKASAT). The propeptide occupies 29–38 (SLPPLPGPDQ). A Tele-8alpha-FAD histidine modification is found at His167. Positions 448 and 450 each coordinate substrate. His548 acts as the Proton acceptor in catalysis. Residue Asn593 is part of the active site.

This sequence belongs to the GMC oxidoreductase family. As to quaternary structure, homotetramer. It depends on FAD as a cofactor.

It is found in the periplasm. The enzyme catalyses D-glucose + O2 = 2-dehydro-D-glucose + H2O2. In terms of biological role, catalyzes the oxidation of various aldopyranoses and disaccharides on carbon-2 to the corresponding 2-keto sugars concomitant with the reduction of O(2) to H(2)O(2). Plays an important role in lignin degradation of wood rot fungi by supplying the essential cosubstrate H(2)O(2) for the ligninolytic peroxidases, lignin peroxidase and manganese-dependent peroxidase. This chain is Pyranose 2-oxidase (p2ox), found in Trametes pubescens (White-rot fungus).